The sequence spans 359 residues: Dihydroorotate dehydrogenase (quinone) (359 aa).

FMN-binding positions include 65–69 (AGLDK) and Thr-89. Lys-69 provides a ligand contact to substrate. A substrate-binding site is contributed by 114-118 (NRLGF). Residues Asn-149 and Asn-182 each coordinate FMN. Asn-182 contacts substrate. The active-site Nucleophile is the Ser-185. Asn-187 contributes to the substrate binding site. Positions 233 and 261 each coordinate FMN. 262–263 (NT) is a substrate binding site. FMN is bound by residues Gly-284, Gly-313, and 334–335 (YT).

The protein belongs to the dihydroorotate dehydrogenase family. Type 2 subfamily. As to quaternary structure, monomer. FMN serves as cofactor.

It is found in the cell membrane. The catalysed reaction is (S)-dihydroorotate + a quinone = orotate + a quinol. Its pathway is pyrimidine metabolism; UMP biosynthesis via de novo pathway; orotate from (S)-dihydroorotate (quinone route): step 1/1. In terms of biological role, catalyzes the conversion of dihydroorotate to orotate with quinone as electron acceptor. In Paracidovorax citrulli (strain AAC00-1) (Acidovorax citrulli), this protein is Dihydroorotate dehydrogenase (quinone).